A 503-amino-acid polypeptide reads, in one-letter code: Maturase K (503 aa).

It belongs to the intron maturase 2 family. MatK subfamily.

It is found in the plastid. The protein resides in the chloroplast. Usually encoded in the trnK tRNA gene intron. Probably assists in splicing its own and other chloroplast group II introns. This chain is Maturase K, found in Rubus ursinus (California blackberry).